The chain runs to 515 residues: RNA-binding region-containing protein 3 (515 aa).

The tract at residues 1 to 26 (MAVPEPSMPLSRGGPGSASLSPPRGD) is disordered. A Phosphoserine modification is found at serine 21. The RRM 1 domain occupies 27–102 (RTLLVRHLPA…HTLVVEFAKE (76 aa)). Disordered stretches follow at residues 107–133 (HSSCPASNAEKKKRLDDTVENDKEKKE), 215–254 (LHAPLPPTSPQPPEEPPLPDEDEDLSSKESEYESSDEEDR), and 337–369 (ETEQNNEEKNSDSPDTGLDDSNTGFGKLFPKPN). Serine 108 is modified (phosphoserine). The segment covering 115-133 (AEKKKRLDDTVENDKEKKE) has biased composition (basic and acidic residues). Over residues 218-230 (PLPPTSPQPPEEP) the composition is skewed to pro residues. A compositionally biased stretch (basic and acidic residues) spans 337–348 (ETEQNNEEKNSD). Phosphoserine is present on serine 349. In terms of domain architecture, RRM 2 spans 419 to 502 (CRIYVKNLAR…KPMVVQFARS (84 aa)).

As to quaternary structure, component of the U11/U12 snRNPs that are part of the U12-type spliceosome. Found in a complex with m(7)G-capped U12 snRNA. Interacts with PDCD7.

It localises to the nucleus. Participates in pre-mRNA U12-dependent splicing, performed by the minor spliceosome which removes U12-type introns. U12-type introns comprises less than 1% of all non-coding sequences. Binds to the 3'-stem-loop of m(7)G-capped U12 snRNA. This chain is RNA-binding region-containing protein 3 (Rnpc3), found in Rattus norvegicus (Rat).